The chain runs to 267 residues: Small ribosomal subunit protein uS3 (267 aa).

The 69-residue stretch at 43 to 111 (IRKAMSKDLE…QVQLNIFEVK (69 aa)) folds into the KH type-2 domain. A disordered region spans residues 216 to 267 (FEEQQAQQSNNRQGRRGDRRPRRGQRNAAPQQNAAAEAPAAAEAPAATETKE). The segment covering 228-240 (QGRRGDRRPRRGQ) has biased composition (basic residues). Over residues 241–267 (RNAAPQQNAAAEAPAAAEAPAATETKE) the composition is skewed to low complexity.

This sequence belongs to the universal ribosomal protein uS3 family. As to quaternary structure, part of the 30S ribosomal subunit. Forms a tight complex with proteins S10 and S14.

In terms of biological role, binds the lower part of the 30S subunit head. Binds mRNA in the 70S ribosome, positioning it for translation. The protein is Small ribosomal subunit protein uS3 of Bifidobacterium adolescentis (strain ATCC 15703 / DSM 20083 / NCTC 11814 / E194a).